Here is a 213-residue protein sequence, read N- to C-terminus: Imidazole glycerol phosphate synthase subunit HisH (213 aa).

The Glutamine amidotransferase type-1 domain occupies 4–211 (NLGVIDYGMG…LHWLHQGAEP (208 aa)). Catalysis depends on cysteine 82, which acts as the Nucleophile. Residues histidine 186 and glutamate 188 contribute to the active site.

Heterodimer of HisH and HisF.

Its subcellular location is the cytoplasm. It catalyses the reaction 5-[(5-phospho-1-deoxy-D-ribulos-1-ylimino)methylamino]-1-(5-phospho-beta-D-ribosyl)imidazole-4-carboxamide + L-glutamine = D-erythro-1-(imidazol-4-yl)glycerol 3-phosphate + 5-amino-1-(5-phospho-beta-D-ribosyl)imidazole-4-carboxamide + L-glutamate + H(+). The enzyme catalyses L-glutamine + H2O = L-glutamate + NH4(+). It participates in amino-acid biosynthesis; L-histidine biosynthesis; L-histidine from 5-phospho-alpha-D-ribose 1-diphosphate: step 5/9. In terms of biological role, IGPS catalyzes the conversion of PRFAR and glutamine to IGP, AICAR and glutamate. The HisH subunit catalyzes the hydrolysis of glutamine to glutamate and ammonia as part of the synthesis of IGP and AICAR. The resulting ammonia molecule is channeled to the active site of HisF. In Synechococcus sp. (strain CC9902), this protein is Imidazole glycerol phosphate synthase subunit HisH.